The chain runs to 758 residues: G-protein alpha subunit activating protein gbas-1 (758 aa).

Residues Leu30–Leu48 show a composition bias toward acidic residues. The interval Leu30 to Arg70 is disordered. Residues Ser49 to Lys61 are compositionally biased toward low complexity. Positions Glu653–Ser666 match the GBA motif. The interval Ala668 to Gln690 is disordered. The segment covering Pro676–Pro689 has biased composition (pro residues).

As to quaternary structure, interacts (via GBA motif) with guanine nucleotide-binding protein G(o) subunit alpha goa-1 (in GDP-bound form); the interaction leads to activation of goa-1. In terms of tissue distribution, expressed in some neurons including the head and tail neurons, HSN and VC, in a subset of glial cells, in the distal tips cells and in the intestine.

Functionally, acts as a non-receptor guanine nucleotide exchange factor which binds to and activates G-protein alpha subunit goa-1. This chain is G-protein alpha subunit activating protein gbas-1, found in Caenorhabditis elegans.